Here is a 421-residue protein sequence, read N- to C-terminus: Na(+)/H(+) antiporter NhaA 1 (421 aa).

The next 11 membrane-spanning stretches (helical) occupy residues S48–W68, L93–I113, S129–V149, A157–L177, V187–F207, L215–V235, L253–G273, F299–L319, V326–V346, G364–F384, and A392–L412.

This sequence belongs to the NhaA Na(+)/H(+) (TC 2.A.33) antiporter family.

It is found in the cell membrane. The catalysed reaction is Na(+)(in) + 2 H(+)(out) = Na(+)(out) + 2 H(+)(in). In terms of biological role, na(+)/H(+) antiporter that extrudes sodium in exchange for external protons. This Deinococcus geothermalis (strain DSM 11300 / CIP 105573 / AG-3a) protein is Na(+)/H(+) antiporter NhaA 1.